The chain runs to 199 residues: NAD(P)H dehydrogenase (quinone) (199 aa).

Positions 4–190 (VLVLYYSAYG…AGARYQGRVI (187 aa)) constitute a Flavodoxin-like domain. FMN contacts are provided by residues 10 to 15 (SAYGHI) and 78 to 80 (TRF). Tyr-12 contacts NAD(+). Residue Trp-98 participates in substrate binding. FMN contacts are provided by residues 113–119 (STATQHG) and His-134.

Belongs to the WrbA family. Requires FMN as cofactor.

It catalyses the reaction a quinone + NADH + H(+) = a quinol + NAD(+). It carries out the reaction a quinone + NADPH + H(+) = a quinol + NADP(+). This Bradyrhizobium sp. (strain BTAi1 / ATCC BAA-1182) protein is NAD(P)H dehydrogenase (quinone).